Here is a 129-residue protein sequence, read N- to C-terminus: Large ribosomal subunit protein bL12 (129 aa).

Positions 94 to 113 are disordered; sequence TEGLPKTVKEKTSKSDAEDT.

This sequence belongs to the bacterial ribosomal protein bL12 family. As to quaternary structure, homodimer. Part of the ribosomal stalk of the 50S ribosomal subunit. Forms a multimeric L10(L12)X complex, where L10 forms an elongated spine to which 2 to 4 L12 dimers bind in a sequential fashion. Binds GTP-bound translation factors.

Its function is as follows. Forms part of the ribosomal stalk which helps the ribosome interact with GTP-bound translation factors. Is thus essential for accurate translation. The protein is Large ribosomal subunit protein bL12 of Chlamydia pneumoniae (Chlamydophila pneumoniae).